The chain runs to 401 residues: Ninja-family protein MODD (401 aa).

Disordered regions lie at residues 95–135 and 215–238; these read KQGV…GEGR and TGNK…GLPP. Over residues 105 to 130 the composition is skewed to low complexity; that stretch reads RPSGGAEAEPAAARLPASGSPSSGSS. Polar residues predominate over residues 217-226; it reads NKKTGGNVNH.

The protein belongs to the Ninja family. Interacts with BZIP46, TPR3 and PUB70.

It localises to the nucleus. Acts as a negative regulator of abscisic acid (ABA) signaling and drought tolerance. Mediates deactivation and degradation of BZIP46, a positive regulator of ABA signaling and drought stress tolerance. Represses BZIP46 activity via interaction with the TPR3-HDAC1 corepressor complex and down-regulation of the histone acetylation level at BZIP46 target genes. Promotes BZIP46 degradation via interaction with the U-box type ubiquitin E3 ligase PUB70. This is Ninja-family protein MODD from Oryza sativa subsp. japonica (Rice).